Reading from the N-terminus, the 588-residue chain is MSKRTTYCGLVTEDLLGQRVTLKGWVHNRRDLGGLIFVDLRDREGYVQIVFNPDFSKEALEIAESIRSEYVIEVEGTVTKRDPETVNPKIKTGNVEVQVDHINIINKAQTPPFSINDENQQVDENIRLKYRYLDLRRQELAQTIKMRHQITRSVREFLDRDGFFDIETPVLTKSTPEGARDYLVPSRVHEGQFYALPQSPQLFKQLLMISGFDKYYQIVKCFRDEDLRADRQPEFTQVDVEMSFVDQEDVMEMGEALLKKVVKDVKGIDLTEQFPRMTYAEAMSRYGSDKPDTRFEMELKDVSELGRTMDFKVFKDTVEKGGEVKALAAKGAADKYTRKDMDALTEFVNIYGAKGLAWVKVVEDGFSGPIARFFEDKDVEKVKELTGAETGDLVMFVADKPSVVAQSLGALRVKLAHELGLIDNNKLNFLWVTDWPLLEYDEDEKRYVAAHHPFTSPKDEDLDKLDSAPEKAQAKAYDIVLNGYELGGGSIRIHNADIQSKMFEVLGFTKEQAQEQFGFLLDAFKYGAPPHGGIALGLDRFVMLLAGRNNLRDTIAFPKTASAVSLMTQAPSEVSDKQLEELSLRIRH.

Residue Glu-177 coordinates L-aspartate. The interval 201-204 (QLFK) is aspartate. Arg-223 is a binding site for L-aspartate. Residues 223–225 (RDE) and Gln-232 each bind ATP. His-451 lines the L-aspartate pocket. Glu-485 lines the ATP pocket. An L-aspartate-binding site is contributed by Arg-492. 537–540 (GLDR) is an ATP binding site.

Belongs to the class-II aminoacyl-tRNA synthetase family. Type 1 subfamily. In terms of assembly, homodimer.

The protein localises to the cytoplasm. It carries out the reaction tRNA(Asp) + L-aspartate + ATP = L-aspartyl-tRNA(Asp) + AMP + diphosphate. Functionally, catalyzes the attachment of L-aspartate to tRNA(Asp) in a two-step reaction: L-aspartate is first activated by ATP to form Asp-AMP and then transferred to the acceptor end of tRNA(Asp). The protein is Aspartate--tRNA ligase of Staphylococcus carnosus (strain TM300).